The primary structure comprises 306 residues: Methionyl-tRNA formyltransferase (306 aa).

Residue S110–P113 coordinates (6S)-5,6,7,8-tetrahydrofolate.

Belongs to the Fmt family.

It carries out the reaction L-methionyl-tRNA(fMet) + (6R)-10-formyltetrahydrofolate = N-formyl-L-methionyl-tRNA(fMet) + (6S)-5,6,7,8-tetrahydrofolate + H(+). Functionally, attaches a formyl group to the free amino group of methionyl-tRNA(fMet). The formyl group appears to play a dual role in the initiator identity of N-formylmethionyl-tRNA by promoting its recognition by IF2 and preventing the misappropriation of this tRNA by the elongation apparatus. This chain is Methionyl-tRNA formyltransferase, found in Brucella suis biovar 1 (strain 1330).